The sequence spans 369 residues: Flagellar P-ring protein (369 aa).

A signal peptide spans 1 to 22 (MFNARRLIAATLLMSCAFGAHA).

This sequence belongs to the FlgI family. As to quaternary structure, the basal body constitutes a major portion of the flagellar organelle and consists of four rings (L,P,S, and M) mounted on a central rod.

The protein resides in the periplasm. Its subcellular location is the bacterial flagellum basal body. Its function is as follows. Assembles around the rod to form the L-ring and probably protects the motor/basal body from shearing forces during rotation. The chain is Flagellar P-ring protein from Pseudomonas entomophila (strain L48).